Consider the following 1969-residue polypeptide: Protein mono-ADP-ribosyltransferase PARP4 (1969 aa).

A BRCT domain is found at 1–94 (MTLGIFANCI…RLLDVRNYDP (94 aa)). The Nuclear localization signal motif lies at 19–25 (PRQQKKK). A disordered region spans residues 92–132 (YDPLSPAPAAPPAERSRSEVQSEYLPSDNTPEKENTEVTEV). Residues 235–363 (SEKLQALLLE…ETNLSKPNPP (129 aa)) enclose the PARP alpha-helical domain. The 205-residue stretch at 362–566 (PPSLAKYRAL…FCTPGDQIKE (205 aa)) folds into the PARP catalytic domain. One can recognise a VIT domain in the interval 600 to 728 (TNIKAGLQDA…KVLIKITYIT (129 aa)). The VWFA domain maps to 869–1039 (EVIICLDCSS…KQIEAQMTRI (171 aa)). The residue at position 1229 (Ser1229) is a Phosphoserine. Positions 1230–1242 (DGHGVLQPVSVSS) match the Nuclear localization signal motif. 5 stretches are compositionally biased toward pro residues: residues 1372-1387 (PPHP…PLPL), 1402-1417 (HPPP…PPPS), 1425-1444 (LPPP…PPIP), 1485-1513 (LPPP…PPPS), and 1521-1540 (LPPP…PPIP). A disordered region spans residues 1372-1608 (PPHPLGGTHP…AGTQFSLSPI (237 aa)). The FH1 domain maps to 1443–1541 (IPGGTLIPPS…HIPPPPPIPG (99 aa)). Residues 1541–1556 (GGTLIPSPSSLFGGTH) are compositionally biased toward low complexity. The segment covering 1557–1585 (LPPPPLLPAGTHIPPPPPITGSTHPPPPS) has biased composition (pro residues). The tract at residues 1808–1969 (FCDEDQESPV…LHRILYYSQG (162 aa)) is interaction with the major vault protein.

This sequence belongs to the ARTD/PARP family. Component of the vault ribonucleoprotein particle, at least composed of MVP, PARP4 and one or more vault RNAs (vRNAs). Interacts with TEP1.

Its subcellular location is the cytoplasm. It is found in the nucleus. It catalyses the reaction L-aspartyl-[protein] + NAD(+) = 4-O-(ADP-D-ribosyl)-L-aspartyl-[protein] + nicotinamide. The catalysed reaction is L-glutamyl-[protein] + NAD(+) = 5-O-(ADP-D-ribosyl)-L-glutamyl-[protein] + nicotinamide. Its function is as follows. Mono-ADP-ribosyltransferase that mediates mono-ADP-ribosylation of target proteins. The sequence is that of Protein mono-ADP-ribosyltransferase PARP4 from Mus musculus (Mouse).